The chain runs to 359 residues: DNA polymerase IV (359 aa).

In terms of domain architecture, UmuC spans 4–184 (IVHVDMDAFY…LKVNRIPGVG (181 aa)). Mg(2+) is bound by residues Asp-8 and Asp-102. Glu-103 is an active-site residue.

It belongs to the DNA polymerase type-Y family. In terms of assembly, monomer. The cofactor is Mg(2+).

Its subcellular location is the cytoplasm. It catalyses the reaction DNA(n) + a 2'-deoxyribonucleoside 5'-triphosphate = DNA(n+1) + diphosphate. Poorly processive, error-prone DNA polymerase involved in untargeted mutagenesis. Copies undamaged DNA at stalled replication forks, which arise in vivo from mismatched or misaligned primer ends. These misaligned primers can be extended by PolIV. Exhibits no 3'-5' exonuclease (proofreading) activity. May be involved in translesional synthesis, in conjunction with the beta clamp from PolIII. The sequence is that of DNA polymerase IV from Xanthomonas euvesicatoria pv. vesicatoria (strain 85-10) (Xanthomonas campestris pv. vesicatoria).